The following is a 177-amino-acid chain: Large ribosomal subunit protein uL6 (177 aa).

This sequence belongs to the universal ribosomal protein uL6 family. As to quaternary structure, part of the 50S ribosomal subunit.

This protein binds to the 23S rRNA, and is important in its secondary structure. It is located near the subunit interface in the base of the L7/L12 stalk, and near the tRNA binding site of the peptidyltransferase center. The protein is Large ribosomal subunit protein uL6 of Methylorubrum populi (strain ATCC BAA-705 / NCIMB 13946 / BJ001) (Methylobacterium populi).